Here is a 637-residue protein sequence, read N- to C-terminus: Glutamate--cysteine ligase catalytic subunit (637 aa).

Residue Met-1 is modified to N-acetylmethionine. Phosphoserine occurs at positions 5 and 8.

Belongs to the glutamate--cysteine ligase type 3 family. In terms of assembly, heterodimer of a catalytic heavy chain and a regulatory light chain. In terms of tissue distribution, most abundant in kidney. Also found in liver and testis.

The catalysed reaction is L-cysteine + L-glutamate + ATP = gamma-L-glutamyl-L-cysteine + ADP + phosphate + H(+). It catalyses the reaction (2S)-2-aminobutanoate + L-glutamate + ATP = gamma-L-glutamyl-(2S)-2-aminobutanoate + ADP + phosphate + H(+). The protein operates within sulfur metabolism; glutathione biosynthesis; glutathione from L-cysteine and L-glutamate: step 1/2. Its activity is regulated as follows. Feedback inhibition by glutathione. Functionally, catalyzes the ATP-dependent ligation of L-glutamate and L-cysteine and participates in the first and rate-limiting step in glutathione biosynthesis. The polypeptide is Glutamate--cysteine ligase catalytic subunit (Rattus norvegicus (Rat)).